The sequence spans 237 residues: MKLTPASILEAPVYYADHIHGKYDVDKVVILRDCGYVSENEIMPQTLKLLPERTNIVDFTNNELEELPPLGHNDTVHTLLLSRNRLGRLDASRLPRYLVNLNLAMNRFEKFEQLQGLRSAPKTLKNLNLRGNVICHKEQYRETVIALCPQLAVLDGERVRQAERQAAPQNEKTDTPTEGPQPVALQATSEKELQLMDHVVNKMDKDTLEDIKQQLAKATTLAEIERLEKLLSGGVIQ.

LRR repeat units lie at residues 53–74 (RTNI…GHND), 75–95 (TVHT…SRLP), and 97–118 (YLVN…QGLR). The LRRCT domain occupies 132 to 170 (NVICHKEQYRETVIALCPQLAVLDGERVRQAERQAAPQN). A disordered region spans residues 161 to 182 (QAERQAAPQNEKTDTPTEGPQP).

This sequence belongs to the U2 small nuclear ribonucleoprotein A family. As to quaternary structure, associated with the spliceosome.

It is found in the nucleus. Functionally, involved in pre-mRNA splicing. The protein is U2 small nuclear ribonucleoprotein A' (LEA1) of Eremothecium gossypii (strain ATCC 10895 / CBS 109.51 / FGSC 9923 / NRRL Y-1056) (Yeast).